Consider the following 644-residue polypeptide: Archaeal Lon protease (644 aa).

Residues 1–18 (MKTTIKNSRTQESVSYEG) show a composition bias toward polar residues. The disordered stretch occupies residues 1–30 (MKTTIKNSRTQESVSYEGNETKKGTGETLS). Residues 1–137 (MKTTIKNSRT…KARSQDEKKN (137 aa)) are Cytoplasmic-facing. ATP is bound at residue 71-78 (GEPGVGKS). The next 2 membrane-spanning stretches (helical) occupy residues 138–155 (LFMM…FMMN) and 156–171 (QFLA…FLAL). The Cytoplasmic portion of the chain corresponds to 172 to 644 (QQFRPRTTVM…PSIMKKPAMH (473 aa)). One can recognise a Lon proteolytic domain in the interval 438–617 (GGEVGRVNGL…GDVLEHALIG (180 aa)). Catalysis depends on residues Ser-524 and Lys-567.

This sequence belongs to the peptidase S16 family. Archaeal LonB subfamily. As to quaternary structure, homohexamer. Organized in a ring with a central cavity.

The protein resides in the cell membrane. Functionally, ATP-dependent serine protease that mediates the selective degradation of mutant and abnormal proteins as well as certain short-lived regulatory proteins. Degrades polypeptides processively. The chain is Archaeal Lon protease from Methanothermobacter thermautotrophicus (strain ATCC 29096 / DSM 1053 / JCM 10044 / NBRC 100330 / Delta H) (Methanobacterium thermoautotrophicum).